A 570-amino-acid chain; its full sequence is Dihydroxy-acid dehydratase 2 (570 aa).

Residue Cys-51 participates in [2Fe-2S] cluster binding. Asp-83 serves as a coordination point for Mg(2+). [2Fe-2S] cluster is bound at residue Cys-124. Residues Asp-125 and Lys-126 each coordinate Mg(2+). Lys-126 is modified (N6-carboxylysine). Cys-196 contacts [2Fe-2S] cluster. Position 446 (Glu-446) interacts with Mg(2+). Ser-472 functions as the Proton acceptor in the catalytic mechanism.

It belongs to the IlvD/Edd family. In terms of assembly, homodimer. It depends on [2Fe-2S] cluster as a cofactor. The cofactor is Mg(2+).

It catalyses the reaction (2R)-2,3-dihydroxy-3-methylbutanoate = 3-methyl-2-oxobutanoate + H2O. The catalysed reaction is (2R,3R)-2,3-dihydroxy-3-methylpentanoate = (S)-3-methyl-2-oxopentanoate + H2O. Its pathway is amino-acid biosynthesis; L-isoleucine biosynthesis; L-isoleucine from 2-oxobutanoate: step 3/4. It participates in amino-acid biosynthesis; L-valine biosynthesis; L-valine from pyruvate: step 3/4. Functions in the biosynthesis of branched-chain amino acids. Catalyzes the dehydration of (2R,3R)-2,3-dihydroxy-3-methylpentanoate (2,3-dihydroxy-3-methylvalerate) into 2-oxo-3-methylpentanoate (2-oxo-3-methylvalerate) and of (2R)-2,3-dihydroxy-3-methylbutanoate (2,3-dihydroxyisovalerate) into 2-oxo-3-methylbutanoate (2-oxoisovalerate), the penultimate precursor to L-isoleucine and L-valine, respectively. This chain is Dihydroxy-acid dehydratase 2, found in Bordetella bronchiseptica (strain ATCC BAA-588 / NCTC 13252 / RB50) (Alcaligenes bronchisepticus).